The primary structure comprises 247 residues: Adenylyl-sulfate kinase (247 aa).

The segment at 1 to 24 is disordered; that stretch reads MSQSNSDDSASSSTQQAGDGQDDV. ATP is bound at residue 55–62; sequence GLSGCGKS. Ser-146 serves as the catalytic Phosphoserine intermediate.

This sequence belongs to the APS kinase family.

The catalysed reaction is adenosine 5'-phosphosulfate + ATP = 3'-phosphoadenylyl sulfate + ADP + H(+). It participates in sulfur metabolism; hydrogen sulfide biosynthesis; sulfite from sulfate: step 2/3. Catalyzes the synthesis of activated sulfate. In Rhodopirellula baltica (strain DSM 10527 / NCIMB 13988 / SH1), this protein is Adenylyl-sulfate kinase.